A 232-amino-acid chain; its full sequence is Small ribosomal subunit protein uS3 (232 aa).

One can recognise a KH type-2 domain in the interval 39-107; the sequence is IREILHKELK…DVVINIVEIR (69 aa).

It belongs to the universal ribosomal protein uS3 family. As to quaternary structure, part of the 30S ribosomal subunit. Forms a tight complex with proteins S10 and S14.

In terms of biological role, binds the lower part of the 30S subunit head. Binds mRNA in the 70S ribosome, positioning it for translation. In Rhodopseudomonas palustris (strain BisB18), this protein is Small ribosomal subunit protein uS3.